The sequence spans 367 residues: Deoxyhypusine synthase-like protein (367 aa).

Residues 1 to 23 are disordered; it reads MKSLFQRRASKVRETEAMNAPVP.

This sequence belongs to the deoxyhypusine synthase family.

This Caulobacter vibrioides (strain ATCC 19089 / CIP 103742 / CB 15) (Caulobacter crescentus) protein is Deoxyhypusine synthase-like protein.